Consider the following 341-residue polypeptide: Phenylalanine--tRNA ligase alpha subunit (341 aa).

Residue Glu-256 participates in Mg(2+) binding.

It belongs to the class-II aminoacyl-tRNA synthetase family. Phe-tRNA synthetase alpha subunit type 1 subfamily. As to quaternary structure, tetramer of two alpha and two beta subunits. Requires Mg(2+) as cofactor.

It is found in the cytoplasm. It carries out the reaction tRNA(Phe) + L-phenylalanine + ATP = L-phenylalanyl-tRNA(Phe) + AMP + diphosphate + H(+). The polypeptide is Phenylalanine--tRNA ligase alpha subunit (Chlamydia caviae (strain ATCC VR-813 / DSM 19441 / 03DC25 / GPIC) (Chlamydophila caviae)).